The following is a 514-amino-acid chain: ATP synthase subunit alpha (514 aa).

An ATP-binding site is contributed by 170–177 (GDRQTGKT).

Belongs to the ATPase alpha/beta chains family. In terms of assembly, F-type ATPases have 2 components, CF(1) - the catalytic core - and CF(0) - the membrane proton channel. CF(1) has five subunits: alpha(3), beta(3), gamma(1), delta(1), epsilon(1). CF(0) has three main subunits: a(1), b(2) and c(9-12). The alpha and beta chains form an alternating ring which encloses part of the gamma chain. CF(1) is attached to CF(0) by a central stalk formed by the gamma and epsilon chains, while a peripheral stalk is formed by the delta and b chains.

It localises to the cell inner membrane. The enzyme catalyses ATP + H2O + 4 H(+)(in) = ADP + phosphate + 5 H(+)(out). Functionally, produces ATP from ADP in the presence of a proton gradient across the membrane. The alpha chain is a regulatory subunit. The protein is ATP synthase subunit alpha of Acidithiobacillus ferridurans.